Reading from the N-terminus, the 149-residue chain is Heat shock protein beta-3 (149 aa).

Residues 47 to 149 (KARAAQAPPV…VEVKDSAGTK (103 aa)) enclose the sHSP domain.

This sequence belongs to the small heat shock protein (HSP20) family.

The protein resides in the cytoplasm. It localises to the nucleus. Its function is as follows. Inhibitor of actin polymerization. The chain is Heat shock protein beta-3 (HSPB3) from Bos taurus (Bovine).